Consider the following 343-residue polypeptide: Fructose-1,6-bisphosphatase, cytosolic (343 aa).

5 residues coordinate Mg(2+): E71, E100, D121, L123, and D124. Substrate contacts are provided by residues 124–127 (DGSS), N215, Y247, Y267, and K277. E283 is a Mg(2+) binding site.

It belongs to the FBPase class 1 family. The cofactor is Mg(2+).

The protein localises to the cytoplasm. It catalyses the reaction beta-D-fructose 1,6-bisphosphate + H2O = beta-D-fructose 6-phosphate + phosphate. This chain is Fructose-1,6-bisphosphatase, cytosolic (CFBP), found in Saccharum hybrid (Sugarcane).